The primary structure comprises 216 residues: MSFSESRHNENCLIQEGALLFCEQAVVAPVSGDLVFRPLKIEVLSKLLAFIDGAGLVDTTYAESDKWVLLSPEFRAIWQDRKRCEYWFLQQIITPSPAFNKVLALLRKSESYWLVGYLLAQSTSGNTMRMLGEDYGVSYTHFRRLCSRALGGKAKSELRNWRMAQSLLNSVEGHENITQLAVNHGYSSPSHFSSEIKELIGVSPRKLSNIIQLADK.

An HTH araC/xylS-type domain is found at 112-210 (YWLVGYLLAQ…GVSPRKLSNI (99 aa)). 2 consecutive DNA-binding regions (H-T-H motif) follow at residues 129–150 (RMLGEDYGVSYTHFRRLCSRAL) and 177–200 (ITQLAVNHGYSSPSHFSSEIKELI).

Its function is as follows. Transcriptional regulator required for the expression of several genes encoding type III secretion system SPI1 effector proteins. The interaction with SicA is necessary for the activation of sigDE (sopB pipC), sicAsipBCDA, and sopE. The protein is Invasion protein InvF (invF) of Salmonella typhi.